The primary structure comprises 181 residues: Adenylate kinase (181 aa).

10 to 15 is an ATP binding site; that stretch reads GAGKGT. Residues 30–59 form an NMP region; the sequence is STGDLFRSNISEGTELGLQAKQYLDAGDLV. Residues threonine 31, arginine 36, 57 to 59, 85 to 88, and glutamine 92 contribute to the AMP site; these read DLV and GFPR. Positions 126 to 132 are LID; sequence GRGRADD. Arginine 127 is a binding site for ATP. AMP is bound by residues arginine 129 and arginine 140. Glycine 166 is an ATP binding site.

The protein belongs to the adenylate kinase family. In terms of assembly, monomer.

The protein resides in the cytoplasm. The enzyme catalyses AMP + ATP = 2 ADP. Its pathway is purine metabolism; AMP biosynthesis via salvage pathway; AMP from ADP: step 1/1. In terms of biological role, catalyzes the reversible transfer of the terminal phosphate group between ATP and AMP. Plays an important role in cellular energy homeostasis and in adenine nucleotide metabolism. The protein is Adenylate kinase of Mycobacteroides abscessus (strain ATCC 19977 / DSM 44196 / CCUG 20993 / CIP 104536 / JCM 13569 / NCTC 13031 / TMC 1543 / L948) (Mycobacterium abscessus).